The primary structure comprises 962 residues: Glycine dehydrogenase (decarboxylating) (962 aa).

K709 is modified (N6-(pyridoxal phosphate)lysine).

The protein belongs to the GcvP family. In terms of assembly, the glycine cleavage system is composed of four proteins: P, T, L and H. Pyridoxal 5'-phosphate is required as a cofactor.

It carries out the reaction N(6)-[(R)-lipoyl]-L-lysyl-[glycine-cleavage complex H protein] + glycine + H(+) = N(6)-[(R)-S(8)-aminomethyldihydrolipoyl]-L-lysyl-[glycine-cleavage complex H protein] + CO2. In terms of biological role, the glycine cleavage system catalyzes the degradation of glycine. The P protein binds the alpha-amino group of glycine through its pyridoxal phosphate cofactor; CO(2) is released and the remaining methylamine moiety is then transferred to the lipoamide cofactor of the H protein. The sequence is that of Glycine dehydrogenase (decarboxylating) from Shewanella pealeana (strain ATCC 700345 / ANG-SQ1).